A 222-amino-acid chain; its full sequence is 7-cyano-7-deazaguanine synthase (222 aa).

8-18 (LSGGMDSTTAA) provides a ligand contact to ATP. Zn(2+)-binding residues include cysteine 187, cysteine 195, cysteine 198, and cysteine 201.

The protein belongs to the QueC family. The cofactor is Zn(2+).

The catalysed reaction is 7-carboxy-7-deazaguanine + NH4(+) + ATP = 7-cyano-7-deazaguanine + ADP + phosphate + H2O + H(+). It functions in the pathway purine metabolism; 7-cyano-7-deazaguanine biosynthesis. Functionally, catalyzes the ATP-dependent conversion of 7-carboxy-7-deazaguanine (CDG) to 7-cyano-7-deazaguanine (preQ(0)). This chain is 7-cyano-7-deazaguanine synthase, found in Nautilia profundicola (strain ATCC BAA-1463 / DSM 18972 / AmH).